Here is a 533-residue protein sequence, read N- to C-terminus: NAD(P)H-quinone oxidoreductase chain 4 2 (533 aa).

The next 14 membrane-spanning stretches (helical) occupy residues 5 to 25 (FPWL…IPVL), 33 to 53 (VRWY…MVFW), 86 to 106 (LAVP…FAAW), 114 to 134 (LFYF…AAQD), 135 to 155 (LILF…LISI), 168 to 188 (FILY…GMAF), 208 to 228 (ALEL…LPIF), 242 to 262 (SAPV…YGLI), 276 to 296 (FAPV…LTAF), 310 to 330 (ISHM…GLNG), 331 to 351 (AMLQ…LAGV), 384 to 404 (ASLA…FLGL), 416 to 436 (VGVI…LLSM), and 462 to 482 (TFIA…PKVA).

The protein belongs to the complex I subunit 4 family.

It is found in the cellular thylakoid membrane. It catalyses the reaction a plastoquinone + NADH + (n+1) H(+)(in) = a plastoquinol + NAD(+) + n H(+)(out). The catalysed reaction is a plastoquinone + NADPH + (n+1) H(+)(in) = a plastoquinol + NADP(+) + n H(+)(out). Its function is as follows. NDH-1 shuttles electrons from NAD(P)H, via FMN and iron-sulfur (Fe-S) centers, to quinones in the respiratory chain. The immediate electron acceptor for the enzyme in this species is believed to be plastoquinone. Couples the redox reaction to proton translocation (for every two electrons transferred, four hydrogen ions are translocated across the cytoplasmic membrane), and thus conserves the redox energy in a proton gradient. In Thermosynechococcus vestitus (strain NIES-2133 / IAM M-273 / BP-1), this protein is NAD(P)H-quinone oxidoreductase chain 4 2.